The following is a 393-amino-acid chain: Formate-dependent phosphoribosylglycinamide formyltransferase (393 aa).

Residues Glu-22–Leu-23 and Glu-82 each bind N(1)-(5-phospho-beta-D-ribosyl)glycinamide. ATP-binding positions include Arg-114, Lys-155, Ser-160–Gln-165, Glu-195–Val-198, and Glu-203. In terms of domain architecture, ATP-grasp spans Arg-119–Leu-308. Mg(2+)-binding residues include Glu-267 and Glu-279. N(1)-(5-phospho-beta-D-ribosyl)glycinamide contacts are provided by residues Asp-286, Lys-356, and Arg-363–Arg-364.

The protein belongs to the PurK/PurT family. Homodimer.

It carries out the reaction N(1)-(5-phospho-beta-D-ribosyl)glycinamide + formate + ATP = N(2)-formyl-N(1)-(5-phospho-beta-D-ribosyl)glycinamide + ADP + phosphate + H(+). The protein operates within purine metabolism; IMP biosynthesis via de novo pathway; N(2)-formyl-N(1)-(5-phospho-D-ribosyl)glycinamide from N(1)-(5-phospho-D-ribosyl)glycinamide (formate route): step 1/1. Involved in the de novo purine biosynthesis. Catalyzes the transfer of formate to 5-phospho-ribosyl-glycinamide (GAR), producing 5-phospho-ribosyl-N-formylglycinamide (FGAR). Formate is provided by PurU via hydrolysis of 10-formyl-tetrahydrofolate. The sequence is that of Formate-dependent phosphoribosylglycinamide formyltransferase from Hydrogenovibrio crunogenus (strain DSM 25203 / XCL-2) (Thiomicrospira crunogena).